The primary structure comprises 139 residues: Cytochrome c-551 (139 aa).

The first 20 residues, 1-20, serve as a signal peptide directing secretion; the sequence is MTRTLAVVLAMTFSAAPVFA. Heme c is bound by residues Cys34, Cys37, His38, and Met116.

The protein belongs to the cytochrome c family. Post-translationally, binds 1 heme c group covalently per subunit.

The chain is Cytochrome c-551 from Roseobacter denitrificans (strain ATCC 33942 / OCh 114) (Erythrobacter sp. (strain OCh 114)).